Reading from the N-terminus, the 243-residue chain is tRNA pseudouridine synthase A (243 aa).

Asp53 serves as the catalytic Nucleophile. Residue Tyr111 coordinates substrate.

The protein belongs to the tRNA pseudouridine synthase TruA family. In terms of assembly, homodimer.

It carries out the reaction uridine(38/39/40) in tRNA = pseudouridine(38/39/40) in tRNA. In terms of biological role, formation of pseudouridine at positions 38, 39 and 40 in the anticodon stem and loop of transfer RNAs. This chain is tRNA pseudouridine synthase A, found in Pelodictyon phaeoclathratiforme (strain DSM 5477 / BU-1).